The sequence spans 578 residues: Probable nucleoredoxin 1 (578 aa).

Thioredoxin domains are found at residues Ser-18–Arg-172, Ser-178–Gln-321, and Glu-325–Ala-485.

The protein belongs to the nucleoredoxin family.

It catalyses the reaction [protein]-dithiol + NAD(+) = [protein]-disulfide + NADH + H(+). The catalysed reaction is [protein]-dithiol + NADP(+) = [protein]-disulfide + NADPH + H(+). Functionally, probable thiol-disulfide oxidoreductase required for pollen tube growth and pollen function in the pistil. Seems not to be required for in vitro pollen tube growth. May be involved in the generation of lipid signaling molecules in pistil. The sequence is that of Probable nucleoredoxin 1 from Arabidopsis thaliana (Mouse-ear cress).